The following is a 1365-amino-acid chain: Polyprotein ABA-1 (1365 aa).

Belongs to the NPA family. In terms of processing, nematode polyprotein allergens (NPAs) are synthesized as large polypeptides that are subsequently proteolytically cleaved to active polypeptide units. Pseudocoelomic fluid.

In terms of biological role, has high binding affinity for fatty acids and retinoids. The polypeptide is Polyprotein ABA-1 (ABA-1) (Ascaris suum (Pig roundworm)).